Reading from the N-terminus, the 89-residue chain is Bombyxin A-2 (89 aa).

The first 19 residues, 1 to 19 (MKILLAIALMLSTVMWVST), serve as a signal peptide directing secretion. Glutamine 20 is modified (pyrrolidone carboxylic acid). Intrachain disulfides connect cysteine 29–cysteine 76, cysteine 41–cysteine 89, and cysteine 75–cysteine 80. Residues 50–68 (SDAQFASYGSAWLMPYSAG) constitute a propeptide, c peptide like.

Belongs to the insulin family. In terms of assembly, heterodimer of a B chain and an A chain linked by two disulfide bonds.

It is found in the secreted. Its function is as follows. Brain peptide responsible for activation of prothoracic glands to produce ecdysone in insects. This is Bombyxin A-2 (BBXA2) from Bombyx mori (Silk moth).